We begin with the raw amino-acid sequence, 63 residues long: Beta-defensin 5 (63 aa).

The first 22 residues, 1–22 (MRIHYLLFSFLLVLLSPLSVFT), serve as a signal peptide directing secretion. Q23 is modified (pyrrolidone carboxylic acid). Disulfide bonds link C31/C59, C38/C52, and C42/C60.

It belongs to the beta-defensin family.

Its subcellular location is the secreted. In terms of biological role, has antibacterial activity. The chain is Beta-defensin 5 (Defb5) from Rattus norvegicus (Rat).